The following is a 244-amino-acid chain: UPF0173 metal-dependent hydrolase RoseRS_3945 (244 aa).

It belongs to the UPF0173 family.

This is UPF0173 metal-dependent hydrolase RoseRS_3945 from Roseiflexus sp. (strain RS-1).